The chain runs to 887 residues: Protein PTHB1 (887 aa).

Residues 1 to 407 (MSLFKARDWW…SQGVWPMTER (407 aa)) form a seven-bladed beta-propeller region. The interval 685–765 (KDKTPAPLQH…FLPLQEDTQE (81 aa)) is interaction with LZTL1. Residues 850 to 887 (DLEERSVEQDSTELFTNHRHLTAETPRPEVSPLQGVSE) are disordered.

Part of BBSome complex, that contains BBS1, BBS2, BBS4, BBS5, BBS7, BBS8/TTC8, BBS9 and BBIP10. Interacts with LZTL1; the interaction mediates the association of LZTL1 with the BBsome complex and regulates BBSome ciliary trafficking. As to expression, widely expressed. Expressed in adult heart, skeletal muscle, lung, liver, kidney, placenta and brain, and in fetal kidney, lung, liver and brain.

The protein localises to the cytoplasm. Its subcellular location is the cytoskeleton. It localises to the microtubule organizing center. It is found in the centrosome. The protein resides in the cell projection. The protein localises to the cilium membrane. Its subcellular location is the centriolar satellite. Functionally, the BBSome complex is thought to function as a coat complex required for sorting of specific membrane proteins to the primary cilia. The BBSome complex is required for ciliogenesis but is dispensable for centriolar satellite function. This ciliogenic function is mediated in part by the Rab8 GDP/GTP exchange factor, which localizes to the basal body and contacts the BBSome. Rab8(GTP) enters the primary cilium and promotes extension of the ciliary membrane. Firstly the BBSome associates with the ciliary membrane and binds to RAB3IP/Rabin8, the guanosyl exchange factor (GEF) for Rab8 and then the Rab8-GTP localizes to the cilium and promotes docking and fusion of carrier vesicles to the base of the ciliary membrane. Required for proper BBSome complex assembly and its ciliary localization. In Homo sapiens (Human), this protein is Protein PTHB1 (BBS9).